A 403-amino-acid chain; its full sequence is Probable tRNA sulfurtransferase (403 aa).

One can recognise a THUMP domain in the interval 60–165 (KLAEERLKPI…KEGVFLSCRT (106 aa)). ATP-binding positions include 183-184 (ML), 208-209 (HF), R265, G287, and Q296.

The protein belongs to the ThiI family.

It localises to the cytoplasm. It carries out the reaction [ThiI sulfur-carrier protein]-S-sulfanyl-L-cysteine + a uridine in tRNA + 2 reduced [2Fe-2S]-[ferredoxin] + ATP + H(+) = [ThiI sulfur-carrier protein]-L-cysteine + a 4-thiouridine in tRNA + 2 oxidized [2Fe-2S]-[ferredoxin] + AMP + diphosphate. The catalysed reaction is [ThiS sulfur-carrier protein]-C-terminal Gly-Gly-AMP + S-sulfanyl-L-cysteinyl-[cysteine desulfurase] + AH2 = [ThiS sulfur-carrier protein]-C-terminal-Gly-aminoethanethioate + L-cysteinyl-[cysteine desulfurase] + A + AMP + 2 H(+). It participates in cofactor biosynthesis; thiamine diphosphate biosynthesis. Its function is as follows. Catalyzes the ATP-dependent transfer of a sulfur to tRNA to produce 4-thiouridine in position 8 of tRNAs, which functions as a near-UV photosensor. Also catalyzes the transfer of sulfur to the sulfur carrier protein ThiS, forming ThiS-thiocarboxylate. This is a step in the synthesis of thiazole, in the thiamine biosynthesis pathway. The sulfur is donated as persulfide by IscS. The protein is Probable tRNA sulfurtransferase of Listeria welshimeri serovar 6b (strain ATCC 35897 / DSM 20650 / CCUG 15529 / CIP 8149 / NCTC 11857 / SLCC 5334 / V8).